A 170-amino-acid polypeptide reads, in one-letter code: Adenine phosphoribosyltransferase (170 aa).

Belongs to the purine/pyrimidine phosphoribosyltransferase family. Homodimer.

It is found in the cytoplasm. The catalysed reaction is AMP + diphosphate = 5-phospho-alpha-D-ribose 1-diphosphate + adenine. Its pathway is purine metabolism; AMP biosynthesis via salvage pathway; AMP from adenine: step 1/1. Catalyzes a salvage reaction resulting in the formation of AMP, that is energically less costly than de novo synthesis. In Bacillus velezensis (strain DSM 23117 / BGSC 10A6 / LMG 26770 / FZB42) (Bacillus amyloliquefaciens subsp. plantarum), this protein is Adenine phosphoribosyltransferase.